The primary structure comprises 185 residues: Ribosome-recycling factor (185 aa).

This sequence belongs to the RRF family.

It localises to the cytoplasm. Responsible for the release of ribosomes from messenger RNA at the termination of protein biosynthesis. May increase the efficiency of translation by recycling ribosomes from one round of translation to another. The polypeptide is Ribosome-recycling factor (Lacticaseibacillus casei (strain BL23) (Lactobacillus casei)).